A 130-amino-acid chain; its full sequence is Large ribosomal subunit protein bL12c (130 aa).

This sequence belongs to the bacterial ribosomal protein bL12 family. Homodimer. Part of the ribosomal stalk of the 50S ribosomal subunit. Forms a multimeric L10(L12)X complex, where L10 forms an elongated spine to which 2 to 4 L12 dimers bind in a sequential fashion. Binds GTP-bound translation factors.

The protein resides in the plastid. In terms of biological role, forms part of the ribosomal stalk which helps the ribosome interact with GTP-bound translation factors. Is thus essential for accurate translation. The sequence is that of Large ribosomal subunit protein bL12c from Prototheca wickerhamii.